The following is a 221-amino-acid chain: Serine/arginine-rich splicing factor 9 (221 aa).

2 consecutive RRM domains span residues 14-89 (GRIY…FPRA) and 111-187 (FRVL…PERG). Lysine 36 participates in a covalent cross-link: Glycyl lysine isopeptide (Lys-Gly) (interchain with G-Cter in SUMO2). The segment covering 187 to 198 (GTSYGCSRSRSG) has biased composition (low complexity). The tract at residues 187–221 (GTSYGCSRSRSGSRGRDSPYQSRGSPHYFSPFRPY) is disordered. An interaction with SAFB1 region spans residues 188-200 (TSYGCSRSRSGSR). Residues serine 189, serine 193, serine 195, serine 204, serine 208, and serine 211 each carry the phosphoserine modification. Position 214 is a phosphotyrosine (tyrosine 214). Serine 216 is modified (phosphoserine).

This sequence belongs to the splicing factor SR family. In terms of assembly, interacts with KHDRBS3. Interacts with HABP4. Interacts with NOL3/ARC/NOP30. Interacts with NSEP1/YB-1/YB1. Interacts with SAFB/SAFB1. Interacts with SRSF6/SFRS6. Interacts with TRA2B/SFRS10. Interacts with C1QBP. May also interact with DUSP11/PIR1. Post-translationally, extensively phosphorylated on serine residues in the RS domain.

The protein resides in the nucleus. Its function is as follows. Plays a role in constitutive splicing and can modulate the selection of alternative splice sites. Represses the splicing of MAPT/Tau exon 10. This Rattus norvegicus (Rat) protein is Serine/arginine-rich splicing factor 9 (Srsf9).